Reading from the N-terminus, the 550-residue chain is Methionine--tRNA ligase (550 aa).

A 'HIGH' region motif is present at residues 12–22; that stretch reads PYANGPLHFGH. Positions 144, 147, 157, and 160 each coordinate Zn(2+). Positions 330-334 match the 'KMSKS' region motif; sequence QFSKS. Lysine 333 provides a ligand contact to ATP.

Belongs to the class-I aminoacyl-tRNA synthetase family. MetG type 1 subfamily. As to quaternary structure, monomer. It depends on Zn(2+) as a cofactor.

The protein localises to the cytoplasm. The catalysed reaction is tRNA(Met) + L-methionine + ATP = L-methionyl-tRNA(Met) + AMP + diphosphate. In terms of biological role, is required not only for elongation of protein synthesis but also for the initiation of all mRNA translation through initiator tRNA(fMet) aminoacylation. In Chlamydia caviae (strain ATCC VR-813 / DSM 19441 / 03DC25 / GPIC) (Chlamydophila caviae), this protein is Methionine--tRNA ligase.